A 443-amino-acid chain; its full sequence is Zinc finger protein 713 (443 aa).

Residues 1–10 show a composition bias toward polar residues; that stretch reads MPSQNAVFSQ. 2 disordered regions span residues 1-23 and 99-118; these read MPSQ…NDGS and DTHP…TSQN. Residues 32-102 form the KRAB domain; sequence LTFQDVAVDF…ERDSLLDTHP (71 aa). Positions 99 to 112 are enriched in basic and acidic residues; sequence DTHPDGENRPEIKK. The C2H2-type 1; degenerate zinc finger occupies 255–280; that stretch reads HTAEKPSECGKAFSHTSSLSQPQMLL. 5 consecutive C2H2-type zinc fingers follow at residues 286-308, 314-336, 342-364, 370-392, and 398-420; these read YKCD…QRIH, FICN…LRIH, YKCN…HRLH, YECG…ERTH, and YKCN…RKIH.

Belongs to the krueppel C2H2-type zinc-finger protein family. As to expression, expressed in fetal and adult brain.

The protein localises to the nucleus. May be involved in transcriptional regulation. In Homo sapiens (Human), this protein is Zinc finger protein 713.